Consider the following 469-residue polypeptide: ATP-dependent protease ATPase subunit HslU (469 aa).

ATP-binding positions include Ile-24, 66–71 (GVGKTE), Asp-282, Glu-347, and Arg-419.

The protein belongs to the ClpX chaperone family. HslU subfamily. In terms of assembly, a double ring-shaped homohexamer of HslV is capped on each side by a ring-shaped HslU homohexamer. The assembly of the HslU/HslV complex is dependent on binding of ATP.

The protein localises to the cytoplasm. Functionally, ATPase subunit of a proteasome-like degradation complex; this subunit has chaperone activity. The binding of ATP and its subsequent hydrolysis by HslU are essential for unfolding of protein substrates subsequently hydrolyzed by HslV. HslU recognizes the N-terminal part of its protein substrates and unfolds these before they are guided to HslV for hydrolysis. The protein is ATP-dependent protease ATPase subunit HslU of Listeria monocytogenes serovar 1/2a (strain ATCC BAA-679 / EGD-e).